We begin with the raw amino-acid sequence, 139 residues long: 6,7-dimethyl-8-ribityllumazine synthase (139 aa).

5-amino-6-(D-ribitylamino)uracil contacts are provided by residues F13, V45–D47, and A69–I71. A74–T75 contacts (2S)-2-hydroxy-3-oxobutyl phosphate. Residue H77 is the Proton donor of the active site. L102 serves as a coordination point for 5-amino-6-(D-ribitylamino)uracil. A (2S)-2-hydroxy-3-oxobutyl phosphate-binding site is contributed by R117.

This sequence belongs to the DMRL synthase family.

The enzyme catalyses (2S)-2-hydroxy-3-oxobutyl phosphate + 5-amino-6-(D-ribitylamino)uracil = 6,7-dimethyl-8-(1-D-ribityl)lumazine + phosphate + 2 H2O + H(+). It functions in the pathway cofactor biosynthesis; riboflavin biosynthesis; riboflavin from 2-hydroxy-3-oxobutyl phosphate and 5-amino-6-(D-ribitylamino)uracil: step 1/2. Functionally, catalyzes the formation of 6,7-dimethyl-8-ribityllumazine by condensation of 5-amino-6-(D-ribitylamino)uracil with 3,4-dihydroxy-2-butanone 4-phosphate. This is the penultimate step in the biosynthesis of riboflavin. The sequence is that of 6,7-dimethyl-8-ribityllumazine synthase from Methanothermobacter thermautotrophicus (strain ATCC 29096 / DSM 1053 / JCM 10044 / NBRC 100330 / Delta H) (Methanobacterium thermoautotrophicum).